The primary structure comprises 826 residues: Receptor-like protein 18 (826 aa).

Topologically, residues 1-780 (MRCQVWNVIE…EEDEEEVISW (780 aa)) are extracellular. LRR repeat units lie at residues 5-31 (VWNV…IFSL), 32-54 (QNLR…SLGN), 55-79 (FSSL…LGNL), 81-103 (HLTS…LGNL), 104-127 (SHLT…LGNL), 128-150 (SHLT…SFEN), and 151-177 (LSHL…SFNQ). Asparagine 12 and asparagine 54 each carry an N-linked (GlcNAc...) asparagine glycan. N-linked (GlcNAc...) asparagine glycosylation is found at asparagine 102, asparagine 126, and asparagine 150. An LRR 8; degenerate repeat occupies 178–198 (LVSLAVEENEFTGNFLLILLN). 3 N-linked (GlcNAc...) asparagine glycosylation sites follow: asparagine 198, asparagine 201, and asparagine 219. LRR repeat units follow at residues 199-223 (LTNL…MSSL), 225-247 (NLVL…LLNI), 248-271 (PSLS…NISS), 273-294 (LSDL…ISKL), 296-318 (NLYT…IFSD), 319-343 (LKLL…TFLS), 345-368 (FKSL…SVSN), 382-405 (PLLL…LRTQ), 406-429 (QTME…LWTL), 430-452 (PTLD…MVPS), 455-478 (QPSM…FICA), 479-500 (FTLQ…ENIS), 501-524 (ESLK…LVRI), 525-550 (SSLE…SLEE), 552-570 (QVLV…QTRF), 571-594 (PNLR…FFVN), 637-661 (LKIF…IGLL), 662-685 (KELH…MGKL), 686-709 (RELE…LGDL), and 711-734 (YLAY…QFLT). Asparagine 268 carries N-linked (GlcNAc...) asparagine glycosylation. N-linked (GlcNAc...) asparagine glycans are attached at residues asparagine 312, asparagine 331, asparagine 362, and asparagine 389. Residues asparagine 436, asparagine 439, asparagine 467, and asparagine 498 are each glycosylated (N-linked (GlcNAc...) asparagine). A glycan (N-linked (GlcNAc...) asparagine) is linked at asparagine 538. N-linked (GlcNAc...) asparagine glycans are attached at residues asparagine 584 and asparagine 594. A glycan (N-linked (GlcNAc...) asparagine) is linked at asparagine 668. Residues asparagine 716 and asparagine 736 are each glycosylated (N-linked (GlcNAc...) asparagine). Residues 781 to 801 (IAATIGFIPGIAFGLMMGYIL) form a helical membrane-spanning segment. The Cytoplasmic portion of the chain corresponds to 802–826 (VCYKPEWFMNVFGKNKSRSTSSTTR).

The protein belongs to the RLP family.

It is found in the cell membrane. In Arabidopsis thaliana (Mouse-ear cress), this protein is Receptor-like protein 18.